We begin with the raw amino-acid sequence, 1018 residues long: Unconventional myosin-Ig (1018 aa).

At Met-1 the chain carries N-acetylmethionine. Residues 9–707 enclose the Myosin motor domain; the sequence is YGKPDFVLLD…TLVTLEQSRA (699 aa). 102–109 lines the ATP pocket; sequence GESGAGKT. Positions 584 to 606 are actin-binding; it reads MVALVENLASKEPFYVRCIKPNE. Positions 710–739 constitute an IQ domain; that stretch reads IPIIVLLLQKAWRGTLARWRCRRLRAIYTI. Residues 824–1017 enclose the TH1 domain; sequence GLRQDWGCRR…RGSFTLLWPS (194 aa).

It belongs to the TRAFAC class myosin-kinesin ATPase superfamily. Myosin family. Interacts with calmodulin; via its IQ motifs. Specifically expressed in hematopoietic cells.

It is found in the cell membrane. The protein localises to the cell projection. The protein resides in the phagocytic cup. In terms of biological role, unconventional myosin required during immune response for detection of rare antigen-presenting cells by regulating T-cell migration. Unconventional myosins are actin-based motor molecules with ATPase activity and serve in intracellular movements. Acts as a regulator of T-cell migration by generating membrane tension, enforcing cell-intrinsic meandering search, thereby enhancing detection of rare antigens during lymph-node surveillance, enabling pathogen eradication. Also required in B-cells, where it regulates different membrane/cytoskeleton-dependent processes. Involved in Fc-gamma receptor (Fc-gamma-R) phagocytosis. Its function is as follows. Constitutes the minor histocompatibility antigen HA-2. More generally, minor histocompatibility antigens (mHags) refer to immunogenic peptide which, when complexed with MHC, can generate an immune response after recognition by specific T-cells. The peptides are derived from polymorphic intracellular proteins, which are cleaved by normal pathways of antigen processing. The binding of these peptides to MHC class I or class II molecules and their expression on the cell surface can stimulate T-cell responses and thereby trigger graft rejection or graft-versus-host disease (GVHD) after hematopoietic stem cell transplantation from HLA-identical sibling donor. GVHD is a frequent complication after bone marrow transplantation (BMT), due to mismatch of minor histocompatibility antigen in HLA-matched sibling marrow transplants. HA-2 is restricted to MHC class I HLA-A*0201. This is Unconventional myosin-Ig (MYO1G) from Homo sapiens (Human).